A 100-amino-acid polypeptide reads, in one-letter code: Urease subunit gamma 2 (100 aa).

It belongs to the urease gamma subunit family. Heterotrimer of UreA (gamma), UreB (beta) and UreC (alpha) subunits. Three heterotrimers associate to form the active enzyme.

It is found in the cytoplasm. It carries out the reaction urea + 2 H2O + H(+) = hydrogencarbonate + 2 NH4(+). Its pathway is nitrogen metabolism; urea degradation; CO(2) and NH(3) from urea (urease route): step 1/1. This is Urease subunit gamma 2 from Psychrobacter cryohalolentis (strain ATCC BAA-1226 / DSM 17306 / VKM B-2378 / K5).